Here is a 73-residue protein sequence, read N- to C-terminus: Translation initiation factor IF-1 (73 aa).

The S1-like domain maps to 1 to 73; the sequence is MAKKDGVIEL…ARGRIVYRYK (73 aa).

It belongs to the IF-1 family. As to quaternary structure, component of the 30S ribosomal translation pre-initiation complex which assembles on the 30S ribosome in the order IF-2 and IF-3, IF-1 and N-formylmethionyl-tRNA(fMet); mRNA recruitment can occur at any time during PIC assembly.

The protein resides in the cytoplasm. Functionally, one of the essential components for the initiation of protein synthesis. Stabilizes the binding of IF-2 and IF-3 on the 30S subunit to which N-formylmethionyl-tRNA(fMet) subsequently binds. Helps modulate mRNA selection, yielding the 30S pre-initiation complex (PIC). Upon addition of the 50S ribosomal subunit IF-1, IF-2 and IF-3 are released leaving the mature 70S translation initiation complex. This is Translation initiation factor IF-1 from Tropheryma whipplei (strain TW08/27) (Whipple's bacillus).